The sequence spans 318 residues: Acetyl-coenzyme A carboxylase carboxyl transferase subunit beta (318 aa).

A CoA carboxyltransferase N-terminal domain is found at 25–294 (LWSKCSECGT…AVKGELPAPA (270 aa)). Zn(2+)-binding residues include Cys-29, Cys-32, Cys-48, and Cys-51. The C4-type zinc finger occupies 29–51 (CSECGTMLFHRELSDNLNVCTNC). A disordered region spans residues 286–318 (VKGELPAPAPLESDAETALASDTDPNGAPPSKD).

The protein belongs to the AccD/PCCB family. Acetyl-CoA carboxylase is a heterohexamer composed of biotin carboxyl carrier protein (AccB), biotin carboxylase (AccC) and two subunits each of ACCase subunit alpha (AccA) and ACCase subunit beta (AccD). Requires Zn(2+) as cofactor.

It localises to the cytoplasm. The enzyme catalyses N(6)-carboxybiotinyl-L-lysyl-[protein] + acetyl-CoA = N(6)-biotinyl-L-lysyl-[protein] + malonyl-CoA. The protein operates within lipid metabolism; malonyl-CoA biosynthesis; malonyl-CoA from acetyl-CoA: step 1/1. In terms of biological role, component of the acetyl coenzyme A carboxylase (ACC) complex. Biotin carboxylase (BC) catalyzes the carboxylation of biotin on its carrier protein (BCCP) and then the CO(2) group is transferred by the transcarboxylase to acetyl-CoA to form malonyl-CoA. This chain is Acetyl-coenzyme A carboxylase carboxyl transferase subunit beta, found in Jannaschia sp. (strain CCS1).